The following is a 232-amino-acid chain: Protein Mis18-alpha (232 aa).

Phosphoserine is present on residues Ser36, Ser39, and Ser40. The 99-residue stretch at 79–177 (PLVFLCSGCR…SVEAIESYIL (99 aa)) folds into the Mis18 domain. Zn(2+)-binding residues include Cys84, Cys87, Cys140, and Cys143. Residue Lys161 forms a Glycyl lysine isopeptide (Lys-Gly) (interchain with G-Cter in SUMO2) linkage. Ser232 is subject to Phosphoserine.

Belongs to the mis18 family. In terms of assembly, homodimer, and heterodimer with OIP5/MIS18B. Identified in a complex containing MIS18A, OIP5/MIS18B, MIS18BP1, RBBP7 and RBBP4.

The protein localises to the nucleus. Its subcellular location is the chromosome. It is found in the centromere. In terms of biological role, required for recruitment of CENPA to centromeres and normal chromosome segregation during mitosis. The sequence is that of Protein Mis18-alpha (MIS18A) from Otolemur garnettii (Small-eared galago).